Consider the following 195-residue polypeptide: Recombination protein RecR (195 aa).

Residues 56 to 71 (CRQCHSFSDDDICPIC) form a C4-type zinc finger. The 96-residue stretch at 79–174 (SVLCVVETAA…KVTRIAQGIP (96 aa)) folds into the Toprim domain.

This sequence belongs to the RecR family.

Functionally, may play a role in DNA repair. It seems to be involved in an RecBC-independent recombinational process of DNA repair. It may act with RecF and RecO. The sequence is that of Recombination protein RecR from Psychrobacter sp. (strain PRwf-1).